The chain runs to 308 residues: uncharacterized protein (308 aa).

Residues 1-19 (MKLLLILILIINNYNLCLS) form the signal peptide. Residues N25 and N300 are each glycosylated (N-linked (GlcNAc...) asparagine).

It is found in the secreted. This is an uncharacterized protein from Dictyostelium discoideum (Social amoeba).